The following is a 285-amino-acid chain: Inositol oxygenase (285 aa).

Arg-29 contributes to the substrate binding site. At Ser-33 the chain carries Phosphoserine. 85–87 lines the substrate pocket; sequence DES. Fe cation is bound by residues His-98, His-123, and Asp-124. Substrate-binding positions include Lys-127 and 141-142; that span reads GD. Fe cation contacts are provided by His-194, His-220, and Asp-253. 220-221 lines the substrate pocket; that stretch reads HS.

The protein belongs to the myo-inositol oxygenase family. Fe cation is required as a cofactor.

It is found in the cytoplasm. It catalyses the reaction myo-inositol + O2 = D-glucuronate + H2O + H(+). Its pathway is polyol metabolism; myo-inositol degradation into D-glucuronate; D-glucuronate from myo-inositol: step 1/1. This Pongo abelii (Sumatran orangutan) protein is Inositol oxygenase (MIOX).